The sequence spans 146 residues: Large ribosomal subunit protein uL15 (146 aa).

The segment covering 1–13 has biased composition (basic and acidic residues); the sequence is MKLHELKPAEGSR. A disordered region spans residues 1 to 51; it reads MKLHELKPAEGSRKVRNRVGRGIGSGNGKTAGKGHKGQNARSGGGVRLGFE. Gly residues-rich tracts occupy residues 21–31 and 42–51; these read RGIGSGNGKTA and SGGGVRLGFE.

Belongs to the universal ribosomal protein uL15 family. Part of the 50S ribosomal subunit.

In terms of biological role, binds to the 23S rRNA. The sequence is that of Large ribosomal subunit protein uL15 from Bacillus cereus (strain G9842).